Here is a 524-residue protein sequence, read N- to C-terminus: MAVSNASVVLSPNLETSSSWYHHNPSSSLDLIRIHTLPMNKMTRRGLIQRVRCETSPSSDSSPLDKLKNSPAIDRYTRERSSIVVIGLSFHTSPLEMRERLAIPEAEWPLAITQLCALNHIEEAAVLSTCNRIEIYVSALSRYRGVKEVTEWMSKRSGIPVSDICQHRFLLYNKDATQHLFQVSAGLESLVIGENQIQSQVRKAEQVVKQEGFGRIISTLFEKANKAGKRVRAQTNIASGAVSVSSAAVELALTKLPGSVSSAMMLVIGAGEMGKRIIEHLVAKGCTKMVVMNRSEDKVAAIRKEMQSGVEIIYKPLDEILACAAEANVIFTSTSSETPLFLKEHVEILPPCPADYARLFVDISVPRNVGSCVAELDSARVYNVDDLKEVVAANKEDRARKSMEALPIIREETIEFEGWRDSLQTFPTIRKLRSKTERIRAECVEKLISKHGNGMDKKTREAVEKQTRIIVNNILDYPMKHLRYDGTGSSKLRETLENMQAVNRIYELDGELLEEKIREKKDKK.

Residues 1 to 52 constitute a chloroplast transit peptide; it reads MAVSNASVVLSPNLETSSSWYHHNPSSSLDLIRIHTLPMNKMTRRGLIQRVR. Substrate contacts are provided by residues 129–132, Ser-189, 194–196, and Gln-200; these read TCNR and ENQ. The active-site Nucleophile is Cys-130. NADP(+) is bound at residue 269-274; sequence GAGEMG.

The protein belongs to the glutamyl-tRNA reductase family.

The protein resides in the plastid. It localises to the chloroplast. It carries out the reaction (S)-4-amino-5-oxopentanoate + tRNA(Glu) + NADP(+) = L-glutamyl-tRNA(Glu) + NADPH + H(+). It participates in porphyrin-containing compound metabolism; protoporphyrin-IX biosynthesis; 5-aminolevulinate from L-glutamyl-tRNA(Glu): step 1/2. The protein operates within porphyrin-containing compound metabolism; chlorophyll biosynthesis. In terms of biological role, catalyzes the NADPH-dependent reduction of glutamyl-tRNA(Glu) to glutamate 1-semialdehyde (GSA). The chain is Probable glutamyl-tRNA reductase 3, chloroplastic (HEMA3) from Arabidopsis thaliana (Mouse-ear cress).